Here is a 205-residue protein sequence, read N- to C-terminus: Urease accessory protein UreG (205 aa).

10 to 17 (GPVGAGKT) lines the GTP pocket.

It belongs to the SIMIBI class G3E GTPase family. UreG subfamily. As to quaternary structure, homodimer. UreD, UreF and UreG form a complex that acts as a GTP-hydrolysis-dependent molecular chaperone, activating the urease apoprotein by helping to assemble the nickel containing metallocenter of UreC. The UreE protein probably delivers the nickel.

The protein resides in the cytoplasm. In terms of biological role, facilitates the functional incorporation of the urease nickel metallocenter. This process requires GTP hydrolysis, probably effectuated by UreG. The chain is Urease accessory protein UreG from Corynebacterium glutamicum (strain R).